The sequence spans 231 residues: Large ribosomal subunit protein uL1 (231 aa).

The protein belongs to the universal ribosomal protein uL1 family. As to quaternary structure, part of the 50S ribosomal subunit.

Functionally, binds directly to 23S rRNA. The L1 stalk is quite mobile in the ribosome, and is involved in E site tRNA release. Protein L1 is also a translational repressor protein, it controls the translation of the L11 operon by binding to its mRNA. The sequence is that of Large ribosomal subunit protein uL1 from Francisella tularensis subsp. tularensis (strain FSC 198).